The sequence spans 64 residues: Large ribosomal subunit protein bL35 (64 aa).

This sequence belongs to the bacterial ribosomal protein bL35 family.

In Shewanella loihica (strain ATCC BAA-1088 / PV-4), this protein is Large ribosomal subunit protein bL35.